The sequence spans 411 residues: Meiotically up-regulated gene 147 protein (411 aa).

Disordered stretches follow at residues M1–K52, E102–D137, and H156–S191. A compositionally biased stretch (polar residues) spans T33–E43. Residues H156–T172 are compositionally biased toward basic and acidic residues.

It is found in the cytoplasm. Its subcellular location is the nucleus. Functionally, has a role in meiosis. This is Meiotically up-regulated gene 147 protein (mug147) from Schizosaccharomyces pombe (strain 972 / ATCC 24843) (Fission yeast).